The chain runs to 2236 residues: MKAIIHDDTVVREIEGQRVQVLQKFADFELKAINKRSSIIQSRQLQVYLRSAAEFKQVIESLIESSEAVVTSQCSESSIRGQKVIGRLQQEADGKHNNLPMLENEAARLLKEGHYASDEIQKTFNNVLSRWEYLLKLLALKWRQLEKEIESIEFKNKCDSIVDWILKIKESDESGKEIFDEIRKCSMVWNEISATFQQMLDPTATDTSNYEKVHETWSNFQEYIDSLHKKLSENERFQKFVDNAEDLIKWMDDKEKEICEKYSKMDFEVMMKYRKTVEIEMKSVEQRIKDLKEQFVGMENDNLRNIPDPKNHVIDVEQRFESFQAFVQKWKTDIENSADADKLMKEAENICCWSSEKIEDLKIMATSDTPDCDEIIMWIETNNFDFNSWDNVVVQFLASSQELLNKQNNGNVKQEVERTTELYELAKRTMKTCNEFLEDRIQTINMEKLIFQTHQKAVILASFLQNHEESPEDMNAEDIEKEIRVIDGITVRCTSVVEQIENIEDELRQKPEQLNQLSVYASKQVNDLNEMKEVLKTTVNSRKAILQRLLDVTYFLDNCCETRKHTDTMLSNVKSSRVKLEIVQPIKDQLDSLKVEMVDMMLDDQQKNMANEELRKTYENLKKIEMEVGRQASQKEARKAADRTEAFVGRVQNWIDNNQIQDDTDIVSETVNLRRTTTHYQHLLSICASYKKSIDSKLEELANVYTDNDPRCLLEGIQNSVENFEVKIHQKVDDTKKLLHITENMNELNSQNEWIRAKIKSLSAEPLWDSLLIAQKMRRRHDNDFEEIANRRKQITEVIQKSATTKDQPILLEIEQNWDRMKDLFDERGGVLERIIKLYEYDEESSTTSEWLREKMICADTIEPKEDESFNEVMVKKLEALTEEVENYKPRIVETHALLEDALVTPNTKDSTSQQTMKLKAVLARKQGEIESDYKALKKLVERKLKTLKAILQDADISHQIADIEQWIEVEQNQLNRYLASDSDELPTKLDDVMTNIQRRRSNLTDIKCNVVGQVQMQKIDDAFGMLDVFSFEVHRIRQKACRLEIFKKLESQTEDVIDAIQMKLEEINVSQSTSRKRQVAGDDLSNLAGDLETLRRRVVEALDRSKEVRAANADLAPQVYDTEERLEKQWTDVSKAYENHKKRMERCKILSELDNEMINMEQWIDTFNEEVTVVIGSIHDGLGVQVGLESIDTWREELSHRVDQLGGVKNSLSSVGNAITEQDKMDPWLERVSNIENNLVKARETIDTKQDDLCRFADILGAERDCERLYSWASGKRHQLETEATMCDAKTLVRRMNEVEKMMMSRIGEVDQLRDFLDNLKASKTSDTFQTTELENKFELLDVEWNHLEEELRRREVDLNDSMSQILIDEQFDTIRQWIKERTEALEADVEVSNKTKPDDIERMQKRHDELASDINDYHTIYEDFLNNGQVEEEKVQVIRHLWSSLIESSTTRQKSLAQECQKSRLFELLDGMSIWLIDAETDVHSTTNFIGLYNSVDAEKASRLLVSLGEQAGEKDDILIRIQCDESVDVIVEKLRNGISQLQMLIKANNEDLDVWKSMQKVVTAIDDEICWFKEINVIFSSTNVGNDVSSNDVLKRKHQRLQLETQRREQKVAKVVYLTTELVSSHRRPSLEYKFVEIDEKVAELTELLESNRQIAEIRTNRLEKWTEYFVTMNEIREKEQLLDQILDLKTGLPETVLADVERKLQVLETVGDHMDTLTIKAEQMSDDEVIRTKVAVTAIDQLRKKWLKMNEELKKMHQKIKESIEFTKFVSTCDTGIQCIREQEEKIGNLVRHQKPASNFENTAYHSTMTFVETYTKDTFEKLKVVCRKLQNSTDAEKKLSLVSERLNALKKQLDLLAEKIAVDDKFKLKVQNIQDEYSRTACELGNWLEQAEEDVSDVVWFQTKDSSEDCRETLLEILGTLRNEKSDLLGELELLEVELAELKEDVKTFTWHSFKTLATRMERLDQTISDRIRIADGEISRHSDNEKICEQAACTLKTYHNVIVDVKKELEILYSLKLEDQKKSLINLIDKVQKRGMIQDLEKWRSLMESRYIFNNKFSSATPHGVLVEMCQCLELMSSMLRSVEQSIADRNHNGVTEKQLHEFELAFDYFDRERNGWLDYKHFELCLKSQGYNFSAENTLKETMTLLDPSTTGHIQKHDYVRYMVKHETTNILDDHSAIEDALKNLDARKISDSMPRKEAEFFMSKIAKHAETSSDQVYLEYKDFVNSFY.

Spectrin repeat units follow at residues 46–146 and 238–335; these read QVYL…RQLE and QKFV…TDIE. Coiled coils occupy residues 496–541 and 603–631; these read VVEQ…TVNS and DDQQ…VGRQ. Spectrin repeat units follow at residues 839 to 949, 1048 to 1146, 1261 to 1361, 1367 to 1459, and 1562 to 1667; these read YEYD…KTLK, KKLE…KRME, LGAE…VDLN, ILID…KSLA, and QKVV…NRLE. Residues 1835–1869 adopt a coiled-coil conformation; sequence QNSTDAEKKLSLVSERLNALKKQLDLLAEKIAVDD. EF-hand domains are found at residues 2104–2139 and 2141–2176; these read KQLH…QGYN and SAEN…HETT. Residues D2154, S2156, T2158, H2160, and D2165 each coordinate Ca(2+).

It belongs to the spectrin family.

This is an uncharacterized protein from Caenorhabditis elegans.